The chain runs to 20 residues: Zinc metalloproteinase-disintegrin-like uracoina-1 (20 aa).

Belongs to the venom metalloproteinase (M12B) family. P-III subfamily. In terms of assembly, monomer. Requires Zn(2+) as cofactor. As to expression, expressed by the venom gland.

It localises to the secreted. With respect to regulation, inhibited by ethylenediaminetetraacetic acid (EDTA) and 1,10-phenanthroline. Not inhibited by tosyl-L-lysine chloromethyl ketone (TCLK) and phenylmethanesulfonylfluoride (PMSF). Functionally, snake venom zinc metalloprotease that possesses hemorrhagic activity (minimum hemorrhagic dose, MHD=4.7 ug) when injected intradermally into mice. Degrades the alpha-chain of fibrinogen (FGA). In Crotalus vegrandis (Uracoan rattlesnake), this protein is Zinc metalloproteinase-disintegrin-like uracoina-1.